The primary structure comprises 429 residues: 3-phosphoshikimate 1-carboxyvinyltransferase (429 aa).

3-phosphoshikimate contacts are provided by Lys23, Ser24, and Arg28. Residue Lys23 participates in phosphoenolpyruvate binding. Residues Gly97 and Arg125 each contribute to the phosphoenolpyruvate site. 3-phosphoshikimate contacts are provided by Ser170, Ser171, Gln172, Ser198, Asp314, Asn338, and Lys342. Gln172 provides a ligand contact to phosphoenolpyruvate. Asp314 serves as the catalytic Proton acceptor. Residues Arg346, Arg388, and Lys413 each contribute to the phosphoenolpyruvate site.

Belongs to the EPSP synthase family. As to quaternary structure, monomer.

Its subcellular location is the cytoplasm. The enzyme catalyses 3-phosphoshikimate + phosphoenolpyruvate = 5-O-(1-carboxyvinyl)-3-phosphoshikimate + phosphate. It participates in metabolic intermediate biosynthesis; chorismate biosynthesis; chorismate from D-erythrose 4-phosphate and phosphoenolpyruvate: step 6/7. Functionally, catalyzes the transfer of the enolpyruvyl moiety of phosphoenolpyruvate (PEP) to the 5-hydroxyl of shikimate-3-phosphate (S3P) to produce enolpyruvyl shikimate-3-phosphate and inorganic phosphate. The polypeptide is 3-phosphoshikimate 1-carboxyvinyltransferase (Pectobacterium atrosepticum (strain SCRI 1043 / ATCC BAA-672) (Erwinia carotovora subsp. atroseptica)).